The primary structure comprises 842 residues: Synaptonemal complex protein 2-like (842 aa).

Disordered regions lie at residues glycine 451–glutamine 473, phenylalanine 505–valine 560, serine 619–glutamate 666, and glutamate 715–valine 738. Composition is skewed to basic and acidic residues over residues threonine 458 to glutamate 470 and phenylalanine 505 to leucine 525. The segment covering asparagine 543–arginine 559 has biased composition (basic residues). Basic and acidic residues-rich tracts occupy residues glycine 624–serine 633 and arginine 643–serine 655.

Belongs to the SYCP2 family. In terms of tissue distribution, specifically expressed in oocytes.

Its subcellular location is the nucleus. It is found in the chromosome. It localises to the centromere. Oocyte-specific protein that localizes to centromeres at the dictyate stage and regulates the survival of primordial oocytes. The sequence is that of Synaptonemal complex protein 2-like from Mus musculus (Mouse).